Reading from the N-terminus, the 187-residue chain is Calmodulin-like protein 1 (187 aa).

Ala-2 carries the post-translational modification N-acetylalanine. 4 EF-hand domains span residues 8 to 43, 44 to 79, 81 to 116, and 117 to 152; these read EQIG…LGQN, PTEA…KLRD, DSEE…IGER, and LTDE…KKRR. Residues Asp-21, Asp-23, Asp-25, Ser-27, Glu-32, Asp-57, Asp-59, Asn-61, Asn-63, Glu-68, Asp-94, Asp-96, Asn-98, Glu-105, Asp-130, Asp-132, Asp-134, Gln-136, and Glu-141 each coordinate Ca(2+). The tract at residues 153–187 is disordered; that stretch reads KRIEEKRDHDGGSRTKSAGPSAAPASKRGQKCVIL. Positions 154–165 are enriched in basic and acidic residues; it reads RIEEKRDHDGGS. Over residues 169–178 the composition is skewed to low complexity; that stretch reads SAGPSAAPAS. Cys-184 is modified (cysteine methyl ester). A lipid anchor (S-farnesyl cysteine) is attached at Cys-184. Positions 185–187 are cleaved as a propeptide — removed in mature form; that stretch reads VIL.

The protein belongs to the calmodulin family.

It localises to the membrane. Its function is as follows. Calcium-binding protein that binds and activates CAMK1, a calcium/calmodulin-dependent kinase. The sequence is that of Calmodulin-like protein 1 (CML1) from Oryza sativa subsp. japonica (Rice).